Here is a 359-residue protein sequence, read N- to C-terminus: DNA replication and repair protein RecF (359 aa).

30 to 37 (GPNGSGKT) is an ATP binding site.

It belongs to the RecF family.

It is found in the cytoplasm. In terms of biological role, the RecF protein is involved in DNA metabolism; it is required for DNA replication and normal SOS inducibility. RecF binds preferentially to single-stranded, linear DNA. It also seems to bind ATP. In Vibrio parahaemolyticus serotype O3:K6 (strain RIMD 2210633), this protein is DNA replication and repair protein RecF.